A 174-amino-acid polypeptide reads, in one-letter code: Nucleoside-triphosphatase THEP1 (174 aa).

Residues 8–15 (GIPGIGKS) and 99–106 (LIVIDEVG) each bind ATP.

This sequence belongs to the THEP1 NTPase family.

It carries out the reaction a ribonucleoside 5'-triphosphate + H2O = a ribonucleoside 5'-diphosphate + phosphate + H(+). In terms of biological role, has nucleotide phosphatase activity towards ATP, GTP, CTP, TTP and UTP. May hydrolyze nucleoside diphosphates with lower efficiency. This chain is Nucleoside-triphosphatase THEP1, found in Methanosarcina barkeri (strain Fusaro / DSM 804).